A 413-amino-acid polypeptide reads, in one-letter code: MLDFAQLPPEVNSALMYAGPGSGPMLAAAAAWEALAAELQTTASTYDALITGLADGPWQGSSAASMVAAATPQVAWLRSTAGQAEQAGSQAVAAASAYEAAFFATVPPPEIAANRALLMALLATNFLGQNTAAIAATEAQYAEMWAQDAAAMYGYAGASAAATQLSPFNPAAQTINPAGLASQAASVGQAVSGAANAQALTDIPKALFGLSGIFTNEPPWLTDLGKALGLTGHTWSSDGSGLIVGGVLGDFVQGVTGSAELDASVAMDTFGKWVSPARLMVTQFKDYFGLAHDLPKWASEGAKAAGEAAKALPAAVPAIPSAGLSGVAGAVGQAASVGGLKVPAVWTATTPAASPAVLAASNGLGAAAAAEGSTHAFGGMPLMGSGAGRAFNNFAAPRYGFKPTVIAQPPAGG.

This sequence belongs to the mycobacterial PPE family.

This is an uncharacterized protein from Mycobacterium tuberculosis (strain CDC 1551 / Oshkosh).